Consider the following 796-residue polypeptide: Potassium transporter 10 (796 aa).

The disordered stretch occupies residues 1–30 (MAGRVESSIGGGEIDEEGDERGSMWDLDQS). Residues 1-58 (MAGRVESSIGGGEIDEEGDERGSMWDLDQSLDQPMDEEAGRLRNMYREKKFSAFLLLQ) are Cytoplasmic-facing. A helical membrane pass occupies residues 59–79 (LSFQSLGVVYGDLGTSPLYVF). Topologically, residues 80-95 (YNTFPRGIKDPEDIIG) are extracellular. Residues 96–116 (ALSLIIYSLTLIPLLKYVFVV) form a helical membrane-spanning segment. The Cytoplasmic portion of the chain corresponds to 117–184 (CKANDNGQGG…ENGTSRKNAL (68 aa)). The helical transmembrane segment at 185-205 (LILVLVGTCMVIGDGILTPAI) threads the bilayer. Over 206–217 (SVLSAAGGLRVN) the chain is Extracellular. Residues 218 to 238 (LPHINNGIVVVVAVVILVSLF) traverse the membrane as a helical segment. The Cytoplasmic segment spans residues 239–248 (SVQHYGTDRV). Residues 249 to 269 (GWLFAPIVFLWFLFIASIGMF) form a helical membrane-spanning segment. Topologically, residues 270–298 (NIWKHDPSVLKAFSPVYIFRYFKRGGQDR) are extracellular. The chain crosses the membrane as a helical span at residues 299–319 (WTSLGGIMLSITGIEALFADL). Residues 320 to 321 (SH) lie on the Cytoplasmic side of the membrane. Residues 322–342 (FPVSAVQFAFTVIVFPCLLLA) traverse the membrane as a helical segment. Residues 343 to 368 (YSGQAAYLRKYPHHVEDAFYQSIPKR) lie on the Extracellular side of the membrane. Residues 369-389 (VYWPMFIIATAAAIVASQATI) traverse the membrane as a helical segment. Residues 390–420 (SATFSLIKQALAHGCFPRVKVVHTSRKFLGQ) are Cytoplasmic-facing. The helical transmembrane segment at 421 to 441 (IYVPDINWILMILCIAVTAGF) threads the bilayer. At 442–453 (KNQNQIGNAYGT) the chain is on the extracellular side. A helical transmembrane segment spans residues 454–474 (AVVIVMLVTTLLMMLIMILVW). The Cytoplasmic segment spans residues 475 to 480 (RCHWVL). A helical membrane pass occupies residues 481 to 501 (VLLFTLLSLVVECTYFSAVLF). Residues 502–505 (KVNQ) lie on the Extracellular side of the membrane. Residues 506–526 (GGWVPLVIAAAFLVIMYVWHY) form a helical membrane-spanning segment. Residues 527–796 (GTLKRYEFEM…LLNVGQIFYV (270 aa)) are Cytoplasmic-facing.

It belongs to the HAK/KUP transporter (TC 2.A.72.3) family.

Its subcellular location is the cell membrane. Functionally, putative potassium transporter. In Arabidopsis thaliana (Mouse-ear cress), this protein is Potassium transporter 10 (POT10).